A 423-amino-acid polypeptide reads, in one-letter code: Autophagy-related protein 18 (423 aa).

WD repeat units follow at residues 200–240 (AHKT…KLWQ) and 245–284 (SSSA…KGGK). The L/FRRG motif motif lies at 241-245 (FRRGS). The interval 281 to 317 (KGGKDADDASTEEARSPTPSETPLASSPPLAAGKLDS) is disordered. Over residues 282–295 (GGKDADDASTEEAR) the composition is skewed to basic and acidic residues.

Belongs to the WD repeat PROPPIN family. Component of the PI(3,5)P2 regulatory complex.

The protein resides in the preautophagosomal structure membrane. The protein localises to the vacuole membrane. Its subcellular location is the endosome membrane. Its function is as follows. The PI(3,5)P2 regulatory complex regulates both the synthesis and turnover of phosphatidylinositol 3,5-bisphosphate (PtdIns(3,5)P2). Necessary for proper vacuole morphology. Plays an important role in osmotically-induced vacuole fragmentation. Required for cytoplasm to vacuole transport (Cvt) vesicle formation, pexophagy and starvation-induced autophagy. Involved in correct ATG9 trafficking to the pre-autophagosomal structure. Might also be involved in premeiotic DNA replication. The chain is Autophagy-related protein 18 (ATG18) from Cryptococcus neoformans var. neoformans serotype D (strain JEC21 / ATCC MYA-565) (Filobasidiella neoformans).